We begin with the raw amino-acid sequence, 122 residues long: Ribonuclease P protein component (122 aa).

This sequence belongs to the RnpA family. Consists of a catalytic RNA component (M1 or rnpB) and a protein subunit.

The catalysed reaction is Endonucleolytic cleavage of RNA, removing 5'-extranucleotides from tRNA precursor.. In terms of biological role, RNaseP catalyzes the removal of the 5'-leader sequence from pre-tRNA to produce the mature 5'-terminus. It can also cleave other RNA substrates such as 4.5S RNA. The protein component plays an auxiliary but essential role in vivo by binding to the 5'-leader sequence and broadening the substrate specificity of the ribozyme. The polypeptide is Ribonuclease P protein component (Shouchella clausii (strain KSM-K16) (Alkalihalobacillus clausii)).